A 203-amino-acid chain; its full sequence is Large ribosomal subunit protein uL6 (203 aa).

The protein belongs to the universal ribosomal protein uL6 family. Part of the 50S ribosomal subunit.

Functionally, this protein binds to the 23S rRNA, and is important in its secondary structure. It is located near the subunit interface in the base of the L7/L12 stalk, and near the tRNA binding site of the peptidyltransferase center. This is Large ribosomal subunit protein uL6 from Hyphomonas neptunium (strain ATCC 15444).